Here is a 406-residue protein sequence, read N- to C-terminus: Cysteine desulfurase (406 aa).

At Lys-226 the chain carries N6-(pyridoxal phosphate)lysine. Cys-364 acts as the Cysteine persulfide intermediate in catalysis.

Belongs to the class-V pyridoxal-phosphate-dependent aminotransferase family. Csd subfamily. In terms of assembly, homodimer. Interacts with SufE and the SufBCD complex composed of SufB, SufC and SufD. The interaction with SufE is required to mediate the direct transfer of the sulfur atom from the S-sulfanylcysteine. Requires pyridoxal 5'-phosphate as cofactor.

It is found in the cytoplasm. It carries out the reaction (sulfur carrier)-H + L-cysteine = (sulfur carrier)-SH + L-alanine. The catalysed reaction is L-selenocysteine + AH2 = hydrogenselenide + L-alanine + A + H(+). It functions in the pathway cofactor biosynthesis; iron-sulfur cluster biosynthesis. Its function is as follows. Cysteine desulfurases mobilize the sulfur from L-cysteine to yield L-alanine, an essential step in sulfur metabolism for biosynthesis of a variety of sulfur-containing biomolecules. Component of the suf operon, which is activated and required under specific conditions such as oxidative stress and iron limitation. Acts as a potent selenocysteine lyase in vitro, that mobilizes selenium from L-selenocysteine. Selenocysteine lyase activity is however unsure in vivo. This is Cysteine desulfurase from Enterobacter sp. (strain 638).